Consider the following 179-residue polypeptide: Adenine phosphoribosyltransferase (179 aa).

The protein belongs to the purine/pyrimidine phosphoribosyltransferase family. Homodimer.

It is found in the cytoplasm. It carries out the reaction AMP + diphosphate = 5-phospho-alpha-D-ribose 1-diphosphate + adenine. It participates in purine metabolism; AMP biosynthesis via salvage pathway; AMP from adenine: step 1/1. Functionally, catalyzes a salvage reaction resulting in the formation of AMP, that is energically less costly than de novo synthesis. In Beijerinckia indica subsp. indica (strain ATCC 9039 / DSM 1715 / NCIMB 8712), this protein is Adenine phosphoribosyltransferase.